Consider the following 542-residue polypeptide: Protein MGF 505-11L (542 aa).

The protein belongs to the asfivirus MGF 505 family.

Its function is as follows. Plays a role in virus cell tropism, and may be required for efficient virus replication in macrophages. The polypeptide is Protein MGF 505-11L (Ornithodoros (relapsing fever ticks)).